We begin with the raw amino-acid sequence, 642 residues long: Threonine--tRNA ligase (642 aa).

The TGS domain occupies 1–61 (MPIITLPDGS…EQDSQLAIIT (61 aa)). Residues 243 to 534 (DHRKIGKQLD…LTEEYAGFFP (292 aa)) form a catalytic region. Zn(2+)-binding residues include Cys334, His385, and His511.

The protein belongs to the class-II aminoacyl-tRNA synthetase family. Homodimer. Requires Zn(2+) as cofactor.

The protein resides in the cytoplasm. The catalysed reaction is tRNA(Thr) + L-threonine + ATP = L-threonyl-tRNA(Thr) + AMP + diphosphate + H(+). Functionally, catalyzes the attachment of threonine to tRNA(Thr) in a two-step reaction: L-threonine is first activated by ATP to form Thr-AMP and then transferred to the acceptor end of tRNA(Thr). Also edits incorrectly charged L-seryl-tRNA(Thr). The polypeptide is Threonine--tRNA ligase (Proteus mirabilis (strain HI4320)).